Here is a 271-residue protein sequence, read N- to C-terminus: 3-methyl-2-oxobutanoate hydroxymethyltransferase (271 aa).

2 residues coordinate Mg(2+): Asp53 and Asp92. 3-methyl-2-oxobutanoate-binding positions include 53-54, Asp92, and Lys120; that span reads DS. Position 122 (Glu122) interacts with Mg(2+). The Proton acceptor role is filled by Glu189.

Belongs to the PanB family. Homodecamer; pentamer of dimers. It depends on Mg(2+) as a cofactor.

It localises to the cytoplasm. It carries out the reaction 3-methyl-2-oxobutanoate + (6R)-5,10-methylene-5,6,7,8-tetrahydrofolate + H2O = 2-dehydropantoate + (6S)-5,6,7,8-tetrahydrofolate. It participates in cofactor biosynthesis; (R)-pantothenate biosynthesis; (R)-pantoate from 3-methyl-2-oxobutanoate: step 1/2. In terms of biological role, catalyzes the reversible reaction in which hydroxymethyl group from 5,10-methylenetetrahydrofolate is transferred onto alpha-ketoisovalerate to form ketopantoate. This Burkholderia thailandensis (strain ATCC 700388 / DSM 13276 / CCUG 48851 / CIP 106301 / E264) protein is 3-methyl-2-oxobutanoate hydroxymethyltransferase.